Reading from the N-terminus, the 1465-residue chain is Neuropathy target esterase sws (1465 aa).

The Lumenal portion of the chain corresponds to 1–34; that stretch reads MDVLEMLRASASGSYNTIFSEAWCQYVSKQITAT. The chain crosses the membrane as a helical span at residues 35 to 55; that stretch reads MYMYCALGMMGVLFLAWFMYF. Over 56-1465 the chain is Cytoplasmic; that stretch reads KRMARLRLRD…RSSANNETKN (1410 aa). Residue 174-301 coordinates a nucleoside 3',5'-cyclic phosphate; the sequence is IFGHFEKPVF…IRVIQVIMIR (128 aa). 2 stretches are compositionally biased toward polar residues: residues 331 to 349 and 434 to 454; these read STMSGPINSQTSQSSRQTP and QQSVGNLSTRRSSITQMTPDG. 2 disordered regions span residues 331 to 421 and 434 to 460; these read STMS…TEVH and QQSVGNLSTRRSSITQMTPDGSHSCPP. A phosphoserine mark is found at Ser-446 and Ser-455. A nucleoside 3',5'-cyclic phosphate is bound by residues 484 to 611 and 600 to 727; these read ELGL…VVRR and IVLD…LSHR. In terms of domain architecture, PNPLA spans 954–1120; that stretch reads LVLGGGGARG…VNNLPGHLWR (167 aa). The GXGXXG motif lies at 958–963; it reads GGGARG. Residues 985 to 989 carry the GXSXG motif; it reads GVSIG. The active-site Nucleophile is Ser-987. Asp-1107 functions as the Proton acceptor in the catalytic mechanism. The DGA/G signature appears at 1107–1109; that stretch reads DGG. Position 1201 is a phosphoserine (Ser-1201). Residues 1371–1465 form a disordered region; it reads LERKTDKSTQ…RSSANNETKN (95 aa). Positions 1378–1390 are enriched in low complexity; sequence STQSSPPTSSRTS. Positions 1392-1402 are enriched in basic and acidic residues; that stretch reads RGKEEARHMDN. Polar residues predominate over residues 1413-1424; sequence TGSGATEGIHTS. The span at 1447 to 1456 shows a compositional bias: basic and acidic residues; it reads VYKDEDKENR.

Belongs to the NTE family. As to quaternary structure, interacts with Pka-C3; interaction inhibits the catalytic function of Pka-C3 and the esterase activity of sws.

The protein localises to the endoplasmic reticulum membrane. The catalysed reaction is a 1-acyl-sn-glycero-3-phosphocholine + H2O = sn-glycerol 3-phosphocholine + a fatty acid + H(+). Functionally, phospholipase B that deacylates intracellular phosphatidylcholine (PtdCho), generating glycerophosphocholine (GroPtdCho). This deacylation occurs at both sn-2 and sn-1 positions of PtdCho. Its specific chemical modification by certain organophosphorus (OP) compounds leads to distal axonopathy. Plays a role in the signaling mechanism between neurons and glia that regulates glia wrapping during development of the adult brain. Essential for membrane lipid homeostasis and cell survival in both neurons and glia of the adult brain. The protein is Neuropathy target esterase sws of Drosophila erecta (Fruit fly).